Consider the following 192-residue polypeptide: MAVKEILRMGNPQLRKVSNVVDDASDELIISLIKDLQDTVKAHQGAGLAAPQIGVPLRVVLFGGGGPNPRYPEAPSIPQTLLINPVLTPIGSDLEDGWEGCLSVPGLRGKVSRWSRIHYRALNEDGFEVEHCLEGFPARVIQHECDHLDGVLFPDRLVDSASFGFTGELETAGIIEKLSSAEQKASQQSRAD.

Positions 101 and 143 each coordinate Fe cation. The active site involves Glu-144. His-147 lines the Fe cation pocket.

It belongs to the polypeptide deformylase family. The cofactor is Fe(2+).

It carries out the reaction N-terminal N-formyl-L-methionyl-[peptide] + H2O = N-terminal L-methionyl-[peptide] + formate. Its function is as follows. Removes the formyl group from the N-terminal Met of newly synthesized proteins. Requires at least a dipeptide for an efficient rate of reaction. N-terminal L-methionine is a prerequisite for activity but the enzyme has broad specificity at other positions. The sequence is that of Peptide deformylase 1 from Prochlorococcus marinus (strain MIT 9313).